The following is a 295-amino-acid chain: Bifunctional protein FolD (295 aa).

NADP(+) is bound by residues 166–168 (GRS), Ser-191, and Ile-232.

The protein belongs to the tetrahydrofolate dehydrogenase/cyclohydrolase family. In terms of assembly, homodimer.

It carries out the reaction (6R)-5,10-methylene-5,6,7,8-tetrahydrofolate + NADP(+) = (6R)-5,10-methenyltetrahydrofolate + NADPH. The enzyme catalyses (6R)-5,10-methenyltetrahydrofolate + H2O = (6R)-10-formyltetrahydrofolate + H(+). It participates in one-carbon metabolism; tetrahydrofolate interconversion. In terms of biological role, catalyzes the oxidation of 5,10-methylenetetrahydrofolate to 5,10-methenyltetrahydrofolate and then the hydrolysis of 5,10-methenyltetrahydrofolate to 10-formyltetrahydrofolate. This Rhodopseudomonas palustris (strain BisB18) protein is Bifunctional protein FolD.